The chain runs to 439 residues: C4-dicarboxylate transport protein 1 (439 aa).

Transmembrane regions (helical) follow at residues 18 to 38, 56 to 76, 91 to 111, 157 to 177, 193 to 213, and 231 to 251; these read VLYI…WLWP, LIKM…IAHV, IYFE…ANVI, GEIL…MSLG, AIFG…FGAM, and LIAT…GIIA.

It belongs to the dicarboxylate/amino acid:cation symporter (DAACS) (TC 2.A.23) family.

It is found in the cell inner membrane. Responsible for the transport of dicarboxylates such as succinate, fumarate, and malate from the periplasm across the membrane. This is C4-dicarboxylate transport protein 1 from Bradyrhizobium sp. (strain ORS 278).